A 594-amino-acid polypeptide reads, in one-letter code: Protein CBFA2T2 (594 aa).

Ser-24 is subject to Phosphoserine. Residue Lys-29 forms a Glycyl lysine isopeptide (Lys-Gly) (interchain with G-Cter in SUMO2) linkage. A disordered region spans residues 48–96 (GGPRPVSFTPTALSNGINHSPPTLNGAPSPPQRFSNGPASSTSSALTNQ). Polar residues-rich tracts occupy residues 55 to 70 (FTPT…SPPT) and 79 to 96 (QRFS…LTNQ). The segment at 98–206 (LPATCGARQL…QHEHLLLNTS (109 aa)) is interaction with PRDM14. The TAFH domain occupies 104-199 (ARQLSKLKRF…TPSQYLAQHE (96 aa)). Residues 220-257 (VHGNGKRPSPERRDENNFERDTVPPEPPAKRVCTISPA) form a disordered region. Basic and acidic residues predominate over residues 227–242 (PSPERRDENNFERDTV). At Ser-255 the chain carries Phosphoserine. The interval 322-368 (QDELVDHRLTEREWADEWKHLDHALNCIMEMVEKTRRSMAVLRRCQE) is nervy homology region 2 (NHR2). Residues 388-416 (RKTGTELVSRQHSPGSTDSLSNDSQREFT) are disordered. Residues 393-410 (ELVSRQHSPGSTDSLSND) show a composition bias toward polar residues. Ser-400 carries the post-translational modification Phosphoserine. Residues 426–475 (VEFWKKTEEAVNKVKIQAMSEVQKAVAEAEQKAFEVIATERARMEQTIAD) are nervy homology region 3 (NHR3). Lys-440 participates in a covalent cross-link: Glycyl lysine isopeptide (Lys-Gly) (interchain with G-Cter in SUMO2). The stretch at 442-482 (QAMSEVQKAVAEAEQKAFEVIATERARMEQTIADVKRQAAE) forms a coiled coil. Residues Cys-498, Cys-501, Cys-509, Cys-512, Cys-518, Cys-522, His-530, and Cys-534 each contribute to the Zn(2+) site. The segment at 498 to 534 (CWNCGRKASETCSGCNIARYCGSFCQHKDWERHHRLC) adopts an MYND-type zinc-finger fold. The interval 538-594 (LHGHSPHSQSRPLLPGGRGSARSADCSVPSPALDKTSATTSRSSTPASVTAIDANGL) is disordered. Phosphoserine is present on Ser-567. Residues 573-588 (TSATTSRSSTPASVTA) are compositionally biased toward low complexity.

It belongs to the CBFA2T family. Homooligomer. Homotetramerization is mediated by the NHR2 domain. Interacts with CBFA2T3/MTG16. Can interact with RUNX1T1/CBFA2T1. Heterotetramerization between members of the CBFA2T family is proposed. Interacts with RBP, GFI1, TCF4, PRDM14. Interacts with TAL1 and CBFA2T3/MTG16; the heteromer with CBFA2T3/MTG16 may function in repression of TAL1. In terms of tissue distribution, expressed in embryonic stem cells.

Its subcellular location is the nucleus. Functionally, transcriptional corepressor which facilitates transcriptional repression via its association with DNA-binding transcription factors and recruitment of other corepressors and histone-modifying enzymes. Via association with PRDM14 is involved in regulation of embryonic stem cell (ESC) pluripotency. Involved in primordial germ cell (PCG) formation. Stabilizes PRDM14 and OCT4 on chromatin in a homooligomerization-dependent mannerCan repress the expression of MMP7 in a ZBTB33-dependent manner. Through heteromerization with CBFA2T3/MTG16 may be involved in regulation of the proliferation and the differentiation of erythroid progenitors by repressing the expression of TAL1 target genes. Required for the maintenance of the secretory cell lineage in the small intestine. Can inhibit Notch signaling probably by association with RBPJ and may be involved in GFI1-mediated Paneth cell differentiation. This Mus musculus (Mouse) protein is Protein CBFA2T2 (Cbfa2t2).